Here is a 719-residue protein sequence, read N- to C-terminus: Fatty acid oxidation complex subunit alpha (719 aa).

An enoyl-CoA hydratase/isomerase region spans residues Met-1–Ala-190. Asp-298 serves as a coordination point for substrate. A 3-hydroxyacyl-CoA dehydrogenase region spans residues His-313–Ala-719. Residues Met-326, Asp-345, Val-402–Glu-404, Lys-409, and Ser-431 each bind NAD(+). The active-site For 3-hydroxyacyl-CoA dehydrogenase activity is the His-452. Asn-455 serves as a coordination point for NAD(+). Asn-502 contacts substrate.

It in the N-terminal section; belongs to the enoyl-CoA hydratase/isomerase family. This sequence in the C-terminal section; belongs to the 3-hydroxyacyl-CoA dehydrogenase family. In terms of assembly, heterotetramer of two alpha chains (FadB) and two beta chains (FadA).

It carries out the reaction a (3S)-3-hydroxyacyl-CoA + NAD(+) = a 3-oxoacyl-CoA + NADH + H(+). The catalysed reaction is a (3S)-3-hydroxyacyl-CoA = a (2E)-enoyl-CoA + H2O. It catalyses the reaction a 4-saturated-(3S)-3-hydroxyacyl-CoA = a (3E)-enoyl-CoA + H2O. The enzyme catalyses (3S)-3-hydroxybutanoyl-CoA = (3R)-3-hydroxybutanoyl-CoA. It carries out the reaction a (3Z)-enoyl-CoA = a 4-saturated (2E)-enoyl-CoA. The catalysed reaction is a (3E)-enoyl-CoA = a 4-saturated (2E)-enoyl-CoA. Its pathway is lipid metabolism; fatty acid beta-oxidation. In terms of biological role, involved in the aerobic and anaerobic degradation of long-chain fatty acids via beta-oxidation cycle. Catalyzes the formation of 3-oxoacyl-CoA from enoyl-CoA via L-3-hydroxyacyl-CoA. It can also use D-3-hydroxyacyl-CoA and cis-3-enoyl-CoA as substrate. The polypeptide is Fatty acid oxidation complex subunit alpha (Psychrobacter sp. (strain PRwf-1)).